The sequence spans 296 residues: Glycine--tRNA ligase alpha subunit (296 aa).

The protein belongs to the class-II aminoacyl-tRNA synthetase family. Tetramer of two alpha and two beta subunits.

It localises to the cytoplasm. The enzyme catalyses tRNA(Gly) + glycine + ATP = glycyl-tRNA(Gly) + AMP + diphosphate. The chain is Glycine--tRNA ligase alpha subunit from Desulfitobacterium hafniense (strain DSM 10664 / DCB-2).